A 228-amino-acid chain; its full sequence is SPbeta prophage-derived uncharacterized protein YomL (228 aa).

An N-terminal signal peptide occupies residues 1–28; the sequence is MRKKRVITCVMAASLTLGSLLPAGYATA.

This Bacillus subtilis (strain 168) protein is SPbeta prophage-derived uncharacterized protein YomL (yomL).